The chain runs to 442 residues: UDP-N-acetylmuramate--L-alanine ligase (442 aa).

ATP is bound at residue 109 to 115; sequence GAHGKTS.

Belongs to the MurCDEF family.

It is found in the cytoplasm. The catalysed reaction is UDP-N-acetyl-alpha-D-muramate + L-alanine + ATP = UDP-N-acetyl-alpha-D-muramoyl-L-alanine + ADP + phosphate + H(+). Its pathway is cell wall biogenesis; peptidoglycan biosynthesis. Its function is as follows. Cell wall formation. The chain is UDP-N-acetylmuramate--L-alanine ligase from Streptococcus pyogenes serotype M28 (strain MGAS6180).